The chain runs to 206 residues: Small ribosomal subunit protein uS4A (206 aa).

The S4 RNA-binding domain occupies 98–164 (MRLDNVVYRL…EKFKTFAENP (67 aa)).

This sequence belongs to the universal ribosomal protein uS4 family. As to quaternary structure, part of the 30S ribosomal subunit. Contacts protein S5. The interaction surface between S4 and S5 is involved in control of translational fidelity.

In terms of biological role, one of the primary rRNA binding proteins, it binds directly to 16S rRNA where it nucleates assembly of the body of the 30S subunit. With S5 and S12 plays an important role in translational accuracy. The protein is Small ribosomal subunit protein uS4A of Clostridium botulinum (strain ATCC 19397 / Type A).